The primary structure comprises 356 residues: N-acyl-phosphatidylethanolamine-hydrolyzing phospholipase D 1 (356 aa).

Residues histidine 144 and histidine 146 each contribute to the Zn(2+) site. Tyrosine 147 lines the an N-acyl-1,2-diacyl-sn-glycero-3-phosphoethanolamine pocket. Aspartate 148, histidine 149, histidine 217, and aspartate 248 together coordinate Zn(2+). Histidine 286 contributes to the an N-acyl-1,2-diacyl-sn-glycero-3-phosphoethanolamine binding site. Histidine 308 serves as a coordination point for Zn(2+).

Belongs to the NAPE-PLD family. The cofactor is Zn(2+). In terms of tissue distribution, expressed in interneurons that are in close proximity to the primary sensory neurons. Predominantly expressed in the pharynx but can also be found in cell bodies of the dorsal and ventral nerve cords.

The catalysed reaction is an N-acyl-1,2-diacyl-sn-glycero-3-phosphoethanolamine + H2O = an N-acylethanolamine + a 1,2-diacyl-sn-glycero-3-phosphate + H(+). It carries out the reaction 1,2-dihexadecanoyl-sn-glycero-3-phospho-(N-hexadecanoyl)-ethanolamine + H2O = 1,2-dihexadecanoyl-sn-glycero-3-phosphate + N-hexadecanoylethanolamine + H(+). The enzyme catalyses N-(5Z,8Z,11Z,14Z-eicosatetraenoyl)-1,2-di-(9Z-octadecenoyl)-sn-glycero-3-phosphoethanolamine + H2O = N-(5Z,8Z,11Z,14Z-eicosatetraenoyl)-ethanolamine + 1,2-di-(9Z-octadecenoyl)-sn-glycero-3-phosphate + H(+). Its function is as follows. D-type phospholipase that hydrolyzes N-acyl-phosphatidylethanolamines (NAPEs) to produce bioactive N-acylethanolamines/fatty acid ethanolamides (NAEs/FAEs) and phosphatidic acid. NAEs are bioactive lipids that are involved in diverse physiological processes such as growth and lifespan. The polypeptide is N-acyl-phosphatidylethanolamine-hydrolyzing phospholipase D 1 (Caenorhabditis elegans).